The following is a 386-amino-acid chain: Myosin light chain kinase family member 4 (386 aa).

At Ser-100 the chain carries Phosphoserine. In terms of domain architecture, Protein kinase spans 107-361 (VSKSEILGGG…ASEALKHPWL (255 aa)). ATP is bound by residues 113-121 (LGGGRFGQV) and Lys-136. Residue Asp-227 is the Proton acceptor of the active site.

It belongs to the protein kinase superfamily. CAMK Ser/Thr protein kinase family.

The catalysed reaction is L-seryl-[protein] + ATP = O-phospho-L-seryl-[protein] + ADP + H(+). It catalyses the reaction L-threonyl-[protein] + ATP = O-phospho-L-threonyl-[protein] + ADP + H(+). The sequence is that of Myosin light chain kinase family member 4 (Mylk4) from Mus musculus (Mouse).